Here is a 392-residue protein sequence, read N- to C-terminus: PMA1 stabilization in the Golgi protein 1 (392 aa).

The signal sequence occupies residues 1–22; it reads MRFHDSILIFFSLASLYQHVHG. Residues threonine 34 and threonine 35 are each glycosylated (O-linked (Man) threonine). Serine 36 is a glycosylation site (O-linked (Man) serine). A glycan (O-linked (Man) threonine) is linked at threonine 45. O-linked (Man) serine glycosylation is present at serine 49. Residues threonine 55, threonine 57, and threonine 63 are each glycosylated (O-linked (Man) threonine). Serine 65 carries an O-linked (Man) serine glycan. A glycan (O-linked (Man) threonine) is linked at threonine 71. The O-linked (Man) serine glycan is linked to serine 80. Residues threonine 89 and threonine 99 are each glycosylated (O-linked (Man) threonine). O-linked (Man) serine glycosylation occurs at serine 107. Residues threonine 108 and threonine 112 are each glycosylated (O-linked (Man) threonine). 2 O-linked (Man) serine glycosylation sites follow: serine 114 and serine 115. The O-linked (Man) threonine glycan is linked to threonine 117. O-linked (Man) serine glycosylation is found at serine 119 and serine 148. O-linked (Man) threonine glycosylation is present at threonine 156. Serine 171 is a glycosylation site (O-linked (Man) serine). The O-linked (Man) threonine glycan is linked to threonine 176. An O-linked (Man) serine glycan is attached at serine 181. O-linked (Man) threonine glycosylation is found at threonine 188, threonine 192, threonine 195, and threonine 199. O-linked (Man) serine glycosylation is found at serine 203 and serine 215. Residues 230–317 lie on the Lumenal side of the membrane; the sequence is DIPATFFSSE…DAGITNDQWY (88 aa). Residues 318-338 form a helical membrane-spanning segment; it reads YVALSIPTVVVVFFVFMYFFL. The Cytoplasmic portion of the chain corresponds to 339–392; the sequence is YVNGKNRDFTDVTRKALNKKRRVLGKFSEMKKFKNMKNHKYTELPSYKKTSKQN.

In terms of assembly, interacts with EXP1. PSG1-N' interacts with ERAD-related proteins involved in PMA1 quality control including EPS1, CDC48, UBX2 and SSM4. PSG1-C' interacts with the TLG1/2 SNARE complex proteins TLG1, TLG2 and VTI1. In terms of processing, the precursor protein is cleaved into two polypeptide chains, PSG1-N' and PSG1-C'. The cleavage is performed in the Golgi apparatus by Ca(+)-dependent serine protease KEX2 between Arg-229 and Asp-230. PSG1-N' is highly O-mannosylated.

It localises to the golgi apparatus lumen. The protein localises to the cytoplasmic vesicle. It is found in the COPI-coated vesicle membrane. In terms of biological role, with EXP1, the specific cargo receptor protein for the plasma membrane ATPase PMA1, is involved in the transport and/or maturation of PMA1. EXP1 and PSG1 probably act sequentially to promote PMA1 sorting between the ER and the Golgi, with EXP1 promoting PMA1 export from the ER to the Golgi while PSG1 has a role in PMA1 maturation or quality control in the Golgi. PSG1 might also couple PMA1 sorting and maturation in the early secretory pathway with the glycosylation machinery. PSG1 is cleaved by KEX2 in two stable peptides, PSG1-N' and PSG1-C', the former supporting a role in maturation quality control, the latter having a role in modulating vesicular trafficking. The polypeptide is PMA1 stabilization in the Golgi protein 1 (Saccharomyces cerevisiae (strain ATCC 204508 / S288c) (Baker's yeast)).